We begin with the raw amino-acid sequence, 483 residues long: ATP-dependent RNA helicase DDX25 (483 aa).

The short motif at 61–74 (LAANSLLNKLIHQS) is the Nuclear export signal element. Residues 97–125 (KTFEELRLKEELLKGIYAMGFNRPSKIQE) carry the Q motif motif. Residues 100 to 114 (EELRLKEELLKGIYA) carry the Nuclear localization signal motif. The 171-residue stretch at 130–300 (MMLAHPPQNL…ERIIPDPNVI (171 aa)) folds into the Helicase ATP-binding domain. 143 to 150 (SQSGTGKT) contributes to the ATP binding site. The DEAD box signature appears at 247 to 250 (DEAD). Positions 311–478 (NIRQYYVLCE…QLNAEDMDEI (168 aa)) constitute a Helicase C-terminal domain.

The protein belongs to the DEAD box helicase family. Phosphorylated on threonine residues. The phosphorylated form is found in the cytoplasm but not in the nucleus. In terms of tissue distribution, highly expressed in the Leydig and germ cells of the testis and weakly expressed in the pituitary and hypothalamus.

The protein resides in the cytoplasm. It is found in the nucleus. It carries out the reaction ATP + H2O = ADP + phosphate + H(+). ATP-dependent RNA helicase. Required for mRNA export and translation regulation during spermatid development. The polypeptide is ATP-dependent RNA helicase DDX25 (DDX25) (Homo sapiens (Human)).